The following is a 920-amino-acid chain: MNVENQDPNIMVIPNNNLGPIDGNNISPAMNDENSNNGSSFLKNLVNTGTNLLFSSSSSIASPPNLGGLSNDSTNNNSNSNNTIDSSKPLSFENDMSDGYEALVRRSEIAIDQCKELLDFFKKRASEEEKYSKNISNMFSKFKVKDDHDTFQKGVSLLNKINDAESTIHRSFSQNITTNLYHPLNEAIKDMEKSRKRLLEDGKKLKNDLKDSIENVKKSNQKYEKLCREMEQAKLELIEEGNDTKSGKVETLEKKLEKTKLASIKAEDEYKEQINETNEFISGVYQNRLSENLREFQQFELTRLEIMKSNIRNYIGFMKDIPQALQCEIDSTKGFVDIIDPEVDLQNYIMNNSNPKKVLLPFIFEAYNDHKPFVDQHNQNSSSSSSTNALNYASPMSASGSITNTITSQSGSTIISNGASQPIEIPSPQPISEQQQIPPQQQQQQQQAQVPPTSINQSSSPPVNPMGRQQSLKENIFGFFNKATTNLKSSTSSLLTKDGNSTTSSNTSTSNSNQLSKSGIGLPIINTNSIFGVELEVLIENDNSKKKGNGVELEVPLILTQFVQALLKLESFKMDGVFVSLPSHFNIQQEKQKLDQTGTLENITDVYLIASLFKNWIGDLPNPLISYAIYQEIIEAPDNAWKIIESGIPILHRRVLHYIIDFLVDFVNCSKMDTHSISLIFTPVLIRSPFNGDSLLNSKKEVAVIENMIIDSLETKRGNYILKRNLPIIPDDENSDDDDDDSGHIDDENNSSTSGENDINTTNINNNNNVNSNNDTNNNNNNSNTTTTNNNNNNDSNNSNSTNNNNNNNNNNTNNDDNESNNSGYGVSSNGNNINSSVGGSVTHHFLYQTTPTNNVTPVLSDFFDTNSSNGSSKANTNTHNLGVRNSSNISFDTISTNQSDSEPVLVEYDNDDFDILSYK.

Positions 65 to 87 are enriched in low complexity; that stretch reads NLGGLSNDSTNNNSNSNNTIDSS. The disordered stretch occupies residues 65-91; that stretch reads NLGGLSNDSTNNNSNSNNTIDSSKPLS. The F-BAR domain occupies 90-344; the sequence is LSFENDMSDG…FVDIIDPEVD (255 aa). Residues 184–276 adopt a coiled-coil conformation; that stretch reads LNEAIKDMEK…EDEYKEQINE (93 aa). The segment covering 403-449 has biased composition (low complexity); sequence TNTITSQSGSTIISNGASQPIEIPSPQPISEQQQIPPQQQQQQQQAQ. Disordered regions lie at residues 403-468 and 490-518; these read TNTI…PMGR and STSSLLTKDGNSTTSSNTSTSNSNQLSKS. The span at 450-468 shows a compositional bias: polar residues; sequence VPPTSINQSSSPPVNPMGR. Positions 490–513 are enriched in low complexity; that stretch reads STSSLLTKDGNSTTSSNTSTSNSN. One can recognise a Rho-GAP domain in the interval 533 to 716; that stretch reads VELEVLIEND…NMIIDSLETK (184 aa). The tract at residues 727 to 836 is disordered; the sequence is PIIPDDENSD…VSSNGNNINS (110 aa). The segment covering 730–741 has biased composition (acidic residues); it reads PDDENSDDDDDD. A compositionally biased stretch (low complexity) spans 757 to 836; the sequence is NDINTTNINN…VSSNGNNINS (80 aa).

The protein localises to the cytoplasm. It localises to the contractile vacuole. Its function is as follows. Rho GTPase-activating protein involved in the signal transduction pathway. Regulator of the contractile vacuole network as well as involved in driving vacuole emptying. This Dictyostelium discoideum (Social amoeba) protein is GTPase activating protein homolog 1 (mgp1).